The primary structure comprises 3739 residues: Cardiomyopathy-associated protein 5 (3739 aa).

Disordered regions lie at residues 1 to 205, 268 to 814, 835 to 884, 967 to 1270, 1288 to 1313, 1325 to 1637, 1650 to 1969, 1986 to 2016, 2065 to 2246, 2273 to 2318, 2377 to 2498, 2513 to 2532, and 2579 to 2616; these read MESG…PPIT, SLEP…SAFV, VSVS…AIQS, LSED…SDVP, TQAS…RDAK, SSAL…NLVS, EMNR…EKGK, SSIP…AIEP, FLSN…WETR, AVGE…LALD, VYPE…SAVE, KKQE…TSKD, and SADG…SEDQ. Positions 18-47 are enriched in acidic residues; it reads ADEEVAQELETEEESEGEGEETAAESEEEP. The span at 48–62 shows a compositional bias: basic and acidic residues; it reads DARLSDEDEEGKTKQ. Polar residues predominate over residues 84-106; the sequence is TWETNSSRSSTPWASGESQTSGI. The segment covering 130 to 153 has biased composition (basic residues); the sequence is RTRKRTQKSKRGSPSLRRKGSKKR. Position 155 is a phosphoserine (S155). Composition is skewed to polar residues over residues 156 to 175 and 325 to 336; these read LESQ…SESP and ADSNLNVPSSTE. Residues 380–406 are a coiled coil; it reads ATMVLERAKEELEQNAQGKESSEDDAS. 3 stretches are compositionally biased toward basic and acidic residues: residues 479 to 637, 644 to 663, and 670 to 730; these read IVHR…REEE, SIVH…REEE, and SIVH…ERGV. Tandem repeats lie at residues 482–493 and 494–505. Positions 482–720 are 20 X 12 AA approximate tandem repeats of R-[DE]-[EK]-[EG]-H-[AV]-P-E-[PS]-[IM]-V-[HLR]; that stretch reads REEEHAPEPI…EEHAPEPMVH (239 aa). The 3; approximate repeat unit spans residues 506 to 519; it reads REEEHAPEPESIVH. Copy 4 of the repeat occupies 520–531; that stretch reads REEEHAPESIVH. One copy of the 5; approximate repeat lies at 532–545; sequence REEEHAPEPVPIVH. A 6; approximate repeat occupies 546-559; sequence REEEHAPEPESIVH. Repeat copies occupy residues 560–571, 572–583, 584–595, and 596–607. The stretch at 608-621 is one 11; approximate repeat; it reads REEEHVPEPESIVR. The stretch at 622–633 is one 12; approximate repeat; it reads KGEEHAPEPIVH. A 14; approximate repeat occupies 634–647; the sequence is REEEQVPEPESIVH. The stretch at 648-659 is repeat 15; sequence REEEHAPEPIVH. One copy of the 16; approximate repeat lies at 660–673; it reads REEEQVPEPESIVH. Repeat copies occupy residues 674–685, 686–696, 697–708, and 709–720. Positions 740-756 are enriched in acidic residues; that stretch reads TEPEDSSLEEEIIELDY. S850 is modified (phosphoserine). Polar residues-rich tracts occupy residues 861–884 and 1151–1161; these read PAMT…AIQS and CLTSPSEQTVL. Basic and acidic residues-rich tracts occupy residues 1188–1197 and 1230–1242; these read AETEQNKVEP and EHSE…EESS. Over residues 1337–1351 the composition is skewed to polar residues; it reads TSVLPTSQPSVSPES. Basic and acidic residues-rich tracts occupy residues 1441-1460 and 1476-1486; these read LEQR…HSPP and TEVKQESKITR. The segment covering 1522–1540 has biased composition (polar residues); sequence ASSSATTVPVTKLDSNSTK. Basic and acidic residues-rich tracts occupy residues 1620–1631, 1697–1706, 1726–1742, 1760–1770, 1786–1803, and 1836–1850; these read NDKHEEITRSPD, IDSRDRDRSL, GPAE…ENRK, IEQKEPKRTLH, DKPE…ENLE, and EKPD…DRKP. Polar residues predominate over residues 1854 to 1863; sequence QLESSESTDL. 4 stretches are compositionally biased toward basic and acidic residues: residues 1874–1885, 1896–1916, 1992–2001, and 2153–2165; these read DTDHTSETRNQE, LSQE…EGRK, KVSDNEDLET, and ARKE…HKET. A compositionally biased stretch (polar residues) spans 2181–2190; sequence KSAQSAFTRM. S2192 carries the phosphoserine modification. 5 stretches are compositionally biased toward basic and acidic residues: residues 2212–2244, 2279–2299, 2306–2318, 2377–2419, and 2429–2448; these read GEDR…DGWE, RMPE…RLEQ, KLME…LALD, VYPE…ETDG, and ELEK…RRFV. The residue at position 2411 (S2411) is a Phosphoserine. S2495 bears the Phosphoserine mark. Basic and acidic residues predominate over residues 2513–2523; it reads KKQETWSDRPT. The stretch at 2640 to 2664 forms a coiled coil; sequence SVDQEESEQMQDKLQYLEEKASFKS. Disordered regions lie at residues 2667–2725, 2742–2773, 2791–2835, 2881–2959, 3027–3047, and 3111–3174; these read VHDE…QPTV, LSPG…SSAE, GPEK…GMPL, EKNE…EREI, LESE…DVNL, and PEEP…QKEP. The span at 2682–2709 shows a compositional bias: basic and acidic residues; sequence SKLEVPDRKITSLKENKTKETHKTKEEI. Residues 2731–3041 are required for RYR2 clustering; that stretch reads YFEKYTLIDY…SSQGNEAGNA (311 aa). Positions 2762–2773 are enriched in polar residues; the sequence is KTLTSFPESSAE. 2 stretches are compositionally biased toward basic and acidic residues: residues 2791 to 2804 and 2812 to 2828; these read GPEK…HAEM and KPDD…DVDS. S2905 carries the phosphoserine modification. Over residues 2918-2929 the composition is skewed to basic and acidic residues; it reads YILKDDILHDES. Positions 3030-3047 are enriched in polar residues; sequence EPSSQGNEAGNASPDVNL. Positions 3153–3162 are enriched in basic and acidic residues; the sequence is VWDRTEDQSA. An amphipathic helix H1 region spans residues 3187-3214; that stretch reads KSLVSEMDKALDIHKDHEVSALDTAISA. The interval 3215–3342 is B-box coiled-coil; BBC; it reads VKVQLGEFLE…ERLLSAMEST (128 aa). Positions 3244–3323 form a coiled coil; sequence FNTIEEKCSK…REAEELDETV (80 aa). The tract at residues 3301–3318 is amphipathic helix H2; that stretch reads SMDTAKDTLETIVREAEE. 2 Fibronectin type-III domains span residues 3374–3475 and 3476–3568; these read VPQP…TAPS and TPVI…TRGT. Positions 3421-3437 are amphipathic helix H3; it reads EINELVEEYRLTVKESC. In terms of domain architecture, B30.2/SPRY spans 3550–3735; sequence NASGTSEQSE…LHLGLEPPDS (186 aa).

Interacts with PRKAR2A. Interacts with ACTN2, DES and DTNBP1/dysbindin. Interacts with DMD/dystrophin. Interacts with the calcineurin catalytic subunit PPP3CA. Interacts with TTN. Interacts with CAPN3; this interaction, which results in CMYA5 proteolysis, may protect CAPN3 from autolysis. Interacts with FSD2. In cardiac muscles, identified in a complex composed of FSD2, CMYA5 and RYR2. Phosphorylated by PKA. As to expression, expressed in skin as well as in cardiac muscle. Expressed in skeletal muscle (at protein level).

It is found in the nucleus. The protein resides in the cytoplasm. It localises to the perinuclear region. The protein localises to the myofibril. Its subcellular location is the sarcomere. It is found in the m line. The protein resides in the sarcoplasmic reticulum. In terms of biological role, may serve as an anchoring protein that mediates the subcellular compartmentation of protein kinase A (PKA) via binding to PRKAR2A. May attenuate calcineurin ability to induce slow-fiber gene program in muscle and may negatively modulate skeletal muscle regeneration. Plays a role in the assembly of ryanodine receptor (RYR2) clusters in striated muscle. The polypeptide is Cardiomyopathy-associated protein 5 (Cmya5) (Mus musculus (Mouse)).